A 469-amino-acid polypeptide reads, in one-letter code: 6-phospho-beta-galactosidase (469 aa).

D-galactose 6-phosphate-binding residues include Gln19, His116, Asn159, Glu160, and Asn297. The active-site Proton donor is the Glu160. Glu375 functions as the Nucleophile in the catalytic mechanism. D-galactose 6-phosphate contacts are provided by Ser428, Trp429, Lys435, and Tyr437.

This sequence belongs to the glycosyl hydrolase 1 family.

It carries out the reaction a 6-phospho-beta-D-galactoside + H2O = D-galactose 6-phosphate + an alcohol. It participates in carbohydrate metabolism; lactose degradation; D-galactose 6-phosphate and beta-D-glucose from lactose 6-phosphate: step 1/1. This is 6-phospho-beta-galactosidase from Streptococcus equi subsp. zooepidemicus (strain MGCS10565).